A 412-amino-acid polypeptide reads, in one-letter code: Alanyl-tRNA editing protein Aarsd1-A (412 aa).

The Zn(2+) site is built by His-108, His-112, Cys-208, and His-212.

This sequence belongs to the class-II aminoacyl-tRNA synthetase family. Alax-L subfamily. The cofactor is Zn(2+).

It localises to the cytoplasm. Its function is as follows. Functions in trans to edit the amino acid moiety from incorrectly charged tRNA(Ala). This is Alanyl-tRNA editing protein Aarsd1-A (aarsd1-a) from Xenopus laevis (African clawed frog).